Consider the following 278-residue polypeptide: Shikimate dehydrogenase (NADP(+)) (278 aa).

Residues 19–21 (SRS) and T66 contribute to the shikimate site. The Proton acceptor role is filled by K70. N91 and D106 together coordinate shikimate. Residues 129–133 (GAGGA) and F221 each bind NADP(+). Y223 provides a ligand contact to shikimate. Position 242 (G242) interacts with NADP(+).

The protein belongs to the shikimate dehydrogenase family. Homodimer.

It carries out the reaction shikimate + NADP(+) = 3-dehydroshikimate + NADPH + H(+). It functions in the pathway metabolic intermediate biosynthesis; chorismate biosynthesis; chorismate from D-erythrose 4-phosphate and phosphoenolpyruvate: step 4/7. In terms of biological role, involved in the biosynthesis of the chorismate, which leads to the biosynthesis of aromatic amino acids. Catalyzes the reversible NADPH linked reduction of 3-dehydroshikimate (DHSA) to yield shikimate (SA). The protein is Shikimate dehydrogenase (NADP(+)) of Anaeromyxobacter sp. (strain K).